Reading from the N-terminus, the 366-residue chain is ERCC4 domain-containing protein EP364R (366 aa).

In terms of domain architecture, ERCC4 spans 3–101; it reads FLVADHREHH…QLYFFVEGPA (99 aa). Composition is skewed to polar residues over residues 320–331 and 349–366; these read RPTMQVATQPAA and PTGHQTLSKEMSLNTVRC. The tract at residues 320–366 is disordered; that stretch reads RPTMQVATQPAATQPLHKVSDDASSDASSPTGHQTLSKEMSLNTVRC.

This sequence belongs to the asfivirus EP364R family.

Its function is as follows. Plays a role in the inhibition of type I interferon signaling pathway. Mechanistically, specifically interacts with 2',3'-cGAMP and cleaves it via its phosphodiesterase activity. In turn, prevents 2',3'-cGAMP interaction with host ER-resident STING1 leading to inhibition of downstream signaling pathway and type I interferon production. The polypeptide is ERCC4 domain-containing protein EP364R (Ornithodoros (relapsing fever ticks)).